The primary structure comprises 67 residues: MRCVPVFVILLLLIASTPSVDARPNPKDDVPLASFHEDANGILQMLWKKGRSCCPSPTSCCPWGKRK.

A signal peptide spans 1 to 22 (MRCVPVFVILLLLIASTPSVDA). Positions 23-51 (RPNPKDDVPLASFHEDANGILQMLWKKGR) are excised as a propeptide. Tryptophan amide is present on Trp63.

Belongs to the conotoxin T superfamily. In terms of processing, contains 2 disulfide bonds that can be either 'C1-C3, C2-C4' or 'C1-C4, C2-C3', since these disulfide connectivities have been observed for conotoxins with cysteine framework V (for examples, see AC P0DQQ7 and AC P81755). As to expression, expressed by the venom duct.

The protein resides in the secreted. The sequence is that of Conotoxin Pu5.1 from Conus pulicarius (Flea-bitten cone).